Reading from the N-terminus, the 244-residue chain is Putative ribosomal recycling factor, mitochondrial (244 aa).

It belongs to the RRF family.

The protein resides in the mitochondrion. Functionally, necessary for protein synthesis in mitochondria. Functions as a ribosome recycling factor in mitochondria. The polypeptide is Putative ribosomal recycling factor, mitochondrial (rrf1) (Schizosaccharomyces pombe (strain 972 / ATCC 24843) (Fission yeast)).